Consider the following 451-residue polypeptide: NADH-quinone oxidoreductase subunit H (451 aa).

A run of 9 helical transmembrane segments spans residues 30–50 (LIIV…LFMI), 98–118 (AVFI…FAVI), 138–158 (LPVA…GIVL), 176–196 (AAQV…VFLY), 213–233 (WGIL…VGET), 262–282 (LFYL…TTLF), 302–322 (WWPV…FIWL), 336–356 (QFGW…EAAI), and 368–388 (VIPF…ADLV).

Belongs to the complex I subunit 1 family. As to quaternary structure, NDH-1 is composed of 14 different subunits. Subunits NuoA, H, J, K, L, M, N constitute the membrane sector of the complex.

The protein resides in the cell membrane. It catalyses the reaction a quinone + NADH + 5 H(+)(in) = a quinol + NAD(+) + 4 H(+)(out). Functionally, NDH-1 shuttles electrons from NADH, via FMN and iron-sulfur (Fe-S) centers, to quinones in the respiratory chain. The immediate electron acceptor for the enzyme in this species is believed to be ubiquinone. Couples the redox reaction to proton translocation (for every two electrons transferred, four hydrogen ions are translocated across the cytoplasmic membrane), and thus conserves the redox energy in a proton gradient. This subunit may bind ubiquinone. This chain is NADH-quinone oxidoreductase subunit H, found in Acidothermus cellulolyticus (strain ATCC 43068 / DSM 8971 / 11B).